The following is a 513-amino-acid chain: MELETLISWLLFSTSLFWFLFLATKTKSKPPKTPSSTTNTPIPKSYPIFGSAFSLLANFHRRIQWTSDILQTIPSSTFVLHRPFGARQVFTAQPAVVQHILRTNFTCYGKGLTFYQSINDFLGDGIFNADGESWKFQRQISSHEFNTRSLRKFVETVVDVELSDRLVPVLSQASNSQTTLDFQDILQRLTFDNICMIAFGYDPEYLLPSLPEIPFAKAFDESSQLSIERLNALIPLLWKVKRFLNIGVERQLKEAVAEVRGLATKIVKNKKKELKEKALQSESESVDLLSRFLSSGHSDESFVTDMVISIILAGRDTTSAALTWFFWLLSKHSHVENEILKEITGKSETVGYDEVKDMVYTHAALCESMRLYPPLPVDTKVAVHDDVLPDGTLVKKGWRVTYHIYAMGRSEKIWGPDWAEFRPERWLSRDEVGKWSFVGIDYYSYPVFQAGPRVCIGKEMAFLQMKRVVAGIMGRFRVVPAMVEGIEPEYTAHFTSVMKGGFPVKIEKRSPLV.

A helical transmembrane segment spans residues 7–24; it reads ISWLLFSTSLFWFLFLAT. C455 contacts heme.

Belongs to the cytochrome P450 family. It depends on heme as a cofactor. Weakly expressed in seedlings.

It localises to the endoplasmic reticulum membrane. In terms of biological role, catalyzes the omega-hydroxylation of various fatty acids (FA). The substrate specificity is higher for myristate &gt; laurate = palmitate (C14&gt;C16=C12). This is Cytochrome P450 94A2 (CYP94A2) from Vicia sativa (Spring vetch).